We begin with the raw amino-acid sequence, 376 residues long: Cellular tumor antigen p53 (376 aa).

Positions 1–36 are transcription activation (acidic); that stretch reads MEGNGERDTMMVEPPDSQEFAELWLRNLIVRDNSLW. A DNA-binding region spans residues 77-268; the sequence is DYPGLLNFTL…KTEESNFKKQ (192 aa). Over residues 150–159 the composition is skewed to basic and acidic residues; sequence RCPHHERSND. The disordered stretch occupies residues 150–171; sequence RCPHHERSNDSSDGPAPPGHLL. Zn(2+)-binding residues include Cys151, His154, Cys214, and Cys218. The tract at residues 249 to 256 is interaction with DNA; that stretch reads RVCACPGR. 2 stretches are compositionally biased toward basic and acidic residues: residues 257–270 and 282–294; these read DRKT…KQQE and SMKD…EASK. The interval 257–306 is disordered; the sequence is DRKTEESNFKKQQEPKTSGKTLTKRSMKDPPSHPEASKKSKNSSSDDEIY. The Bipartite nuclear localization signal motif lies at 280–297; the sequence is KRSMKDPPSHPEASKKSK. An oligomerization region spans residues 303-334; it reads DEIYTLQVRGKERYEFLKKINDGLELSDVVPP. Residues 317–328 carry the Nuclear export signal motif; the sequence is EFLKKINDGLEL. Positions 342 to 376 are disordered; the sequence is QKLLSKTCRKERDGAAGEPKRGKKRLVKEEKCDSD. The segment at 347-372 is basic (repression of DNA-binding); sequence KTCRKERDGAAGEPKRGKKRLVKEEK. Residues 349–361 show a composition bias toward basic and acidic residues; sequence CRKERDGAAGEPK.

It belongs to the p53 family. Binds DNA as a homotetramer. Zn(2+) is required as a cofactor.

The protein localises to the cytoplasm. It is found in the nucleus. Multifunctional transcription factor that induces cell cycle arrest, DNA repair or apoptosis upon binding to its target DNA sequence. Acts as a tumor suppressor in many tumor types; induces growth arrest or apoptosis depending on the physiological circumstances and cell type. Negatively regulates cell division by controlling expression of a set of genes required for this process. One of the activated genes is an inhibitor of cyclin-dependent kinases. Apoptosis induction seems to be mediated either by stimulation of BAX and FAS antigen expression, or by repression of Bcl-2 expression. The sequence is that of Cellular tumor antigen p53 (tp53) from Ictalurus punctatus (Channel catfish).